The primary structure comprises 660 residues: Bifunctional polymyxin resistance protein ArnA (660 aa).

Residues 1–304 (MKAVIFAYHD…TLGLVAGARL (304 aa)) are formyltransferase ArnAFT. His-104 acts as the Proton donor; for formyltransferase activity in catalysis. (6R)-10-formyltetrahydrofolate is bound by residues Arg-114 and 136-140 (VKRAD). The interval 314-660 (RRIRVLILGV…RSVDVAERAS (347 aa)) is dehydrogenase ArnADH. NAD(+) contacts are provided by residues Asp-347 and 368 to 369 (DI). UDP-alpha-D-glucuronate is bound by residues Ala-393, Tyr-398, and 432–433 (TS). The active-site Proton acceptor; for decarboxylase activity is Glu-434. UDP-alpha-D-glucuronate-binding positions include Arg-460, Asn-492, 526-535 (KLIDGGQQKR), and Tyr-613. Arg-619 (proton donor; for decarboxylase activity) is an active-site residue.

In the N-terminal section; belongs to the Fmt family. UDP-L-Ara4N formyltransferase subfamily. The protein in the C-terminal section; belongs to the NAD(P)-dependent epimerase/dehydratase family. UDP-glucuronic acid decarboxylase subfamily. In terms of assembly, homohexamer, formed by a dimer of trimers.

It carries out the reaction UDP-alpha-D-glucuronate + NAD(+) = UDP-beta-L-threo-pentopyranos-4-ulose + CO2 + NADH. The catalysed reaction is UDP-4-amino-4-deoxy-beta-L-arabinose + (6R)-10-formyltetrahydrofolate = UDP-4-deoxy-4-formamido-beta-L-arabinose + (6S)-5,6,7,8-tetrahydrofolate + H(+). The protein operates within nucleotide-sugar biosynthesis; UDP-4-deoxy-4-formamido-beta-L-arabinose biosynthesis; UDP-4-deoxy-4-formamido-beta-L-arabinose from UDP-alpha-D-glucuronate: step 1/3. It participates in nucleotide-sugar biosynthesis; UDP-4-deoxy-4-formamido-beta-L-arabinose biosynthesis; UDP-4-deoxy-4-formamido-beta-L-arabinose from UDP-alpha-D-glucuronate: step 3/3. Its pathway is bacterial outer membrane biogenesis; lipopolysaccharide biosynthesis. In terms of biological role, bifunctional enzyme that catalyzes the oxidative decarboxylation of UDP-glucuronic acid (UDP-GlcUA) to UDP-4-keto-arabinose (UDP-Ara4O) and the addition of a formyl group to UDP-4-amino-4-deoxy-L-arabinose (UDP-L-Ara4N) to form UDP-L-4-formamido-arabinose (UDP-L-Ara4FN). The modified arabinose is attached to lipid A and is required for resistance to polymyxin and cationic antimicrobial peptides. This is Bifunctional polymyxin resistance protein ArnA from Salmonella newport (strain SL254).